A 212-amino-acid chain; its full sequence is Ribosomal RNA small subunit methyltransferase G (212 aa).

Residues glycine 73, phenylalanine 78, 124–125 (IE), and arginine 137 contribute to the S-adenosyl-L-methionine site.

This sequence belongs to the methyltransferase superfamily. RNA methyltransferase RsmG family.

Its subcellular location is the cytoplasm. Specifically methylates the N7 position of a guanine in 16S rRNA. The chain is Ribosomal RNA small subunit methyltransferase G from Karelsulcia muelleri (strain GWSS) (Sulcia muelleri).